The sequence spans 215 residues: Phosphatidylserine decarboxylase proenzyme (215 aa).

Residue Ser184 is the Schiff-base intermediate with substrate; via pyruvic acid of the active site. The residue at position 184 (Ser184) is a Pyruvic acid (Ser); by autocatalysis.

This sequence belongs to the phosphatidylserine decarboxylase family. PSD-A subfamily. Heterodimer of a large membrane-associated beta subunit and a small pyruvoyl-containing alpha subunit. Requires pyruvate as cofactor. In terms of processing, is synthesized initially as an inactive proenzyme. Formation of the active enzyme involves a self-maturation process in which the active site pyruvoyl group is generated from an internal serine residue via an autocatalytic post-translational modification. Two non-identical subunits are generated from the proenzyme in this reaction, and the pyruvate is formed at the N-terminus of the alpha chain, which is derived from the carboxyl end of the proenzyme. The post-translation cleavage follows an unusual pathway, termed non-hydrolytic serinolysis, in which the side chain hydroxyl group of the serine supplies its oxygen atom to form the C-terminus of the beta chain, while the remainder of the serine residue undergoes an oxidative deamination to produce ammonia and the pyruvoyl prosthetic group on the alpha chain.

The protein resides in the cell membrane. The enzyme catalyses a 1,2-diacyl-sn-glycero-3-phospho-L-serine + H(+) = a 1,2-diacyl-sn-glycero-3-phosphoethanolamine + CO2. It functions in the pathway phospholipid metabolism; phosphatidylethanolamine biosynthesis; phosphatidylethanolamine from CDP-diacylglycerol: step 2/2. In terms of biological role, catalyzes the formation of phosphatidylethanolamine (PtdEtn) from phosphatidylserine (PtdSer). The chain is Phosphatidylserine decarboxylase proenzyme from Ralstonia pickettii (strain 12J).